We begin with the raw amino-acid sequence, 88 residues long: Exodeoxyribonuclease 7 small subunit (88 aa).

The segment at Asp-69–Gln-88 is disordered.

Belongs to the XseB family. Heterooligomer composed of large and small subunits.

The protein resides in the cytoplasm. The catalysed reaction is Exonucleolytic cleavage in either 5'- to 3'- or 3'- to 5'-direction to yield nucleoside 5'-phosphates.. In terms of biological role, bidirectionally degrades single-stranded DNA into large acid-insoluble oligonucleotides, which are then degraded further into small acid-soluble oligonucleotides. This Xylella fastidiosa (strain M12) protein is Exodeoxyribonuclease 7 small subunit.